We begin with the raw amino-acid sequence, 93 residues long: Protein LSO1 (93 aa).

Residues 1–73 are disordered; sequence MHNTGKRYSE…TEKLRAKKER (73 aa). A coiled-coil region spans residues 20–83; the sequence is ARKRRQAYEK…DQLLAAEEEA (64 aa). Composition is skewed to basic and acidic residues over residues 25–49 and 57–73; these read QAYE…EEGA and LIME…KKER.

Its subcellular location is the nucleus. It localises to the cytoplasm. Likely to play a role in iron homeostasis. This is Protein LSO1 from Saccharomyces cerevisiae (strain ATCC 204508 / S288c) (Baker's yeast).